The primary structure comprises 423 residues: Glutamyl-tRNA reductase 2 (423 aa).

Substrate-binding positions include 48–51 (TCYR), S103, 108–110 (EPQ), and Q114. Catalysis depends on C49, which acts as the Nucleophile. NADP(+) is bound at residue 183–188 (GAGEMA).

The protein belongs to the glutamyl-tRNA reductase family. Homodimer.

The enzyme catalyses (S)-4-amino-5-oxopentanoate + tRNA(Glu) + NADP(+) = L-glutamyl-tRNA(Glu) + NADPH + H(+). It participates in porphyrin-containing compound metabolism; protoporphyrin-IX biosynthesis; 5-aminolevulinate from L-glutamyl-tRNA(Glu): step 1/2. In terms of biological role, catalyzes the NADPH-dependent reduction of glutamyl-tRNA(Glu) to glutamate 1-semialdehyde (GSA). In Anaeromyxobacter sp. (strain Fw109-5), this protein is Glutamyl-tRNA reductase 2.